Here is a 277-residue protein sequence, read N- to C-terminus: Phosphoenolpyruvate synthase regulatory protein (277 aa).

Residue 157–164 (GVSRCGKT) participates in ADP binding.

It belongs to the pyruvate, phosphate/water dikinase regulatory protein family. PSRP subfamily.

The catalysed reaction is [pyruvate, water dikinase] + ADP = [pyruvate, water dikinase]-phosphate + AMP + H(+). The enzyme catalyses [pyruvate, water dikinase]-phosphate + phosphate + H(+) = [pyruvate, water dikinase] + diphosphate. Bifunctional serine/threonine kinase and phosphorylase involved in the regulation of the phosphoenolpyruvate synthase (PEPS) by catalyzing its phosphorylation/dephosphorylation. This chain is Phosphoenolpyruvate synthase regulatory protein, found in Escherichia fergusonii (strain ATCC 35469 / DSM 13698 / CCUG 18766 / IAM 14443 / JCM 21226 / LMG 7866 / NBRC 102419 / NCTC 12128 / CDC 0568-73).